The following is a 110-amino-acid chain: Iron-sulfur cluster assembly protein CyaY (110 aa).

The protein belongs to the frataxin family.

Its function is as follows. Involved in iron-sulfur (Fe-S) cluster assembly. May act as a regulator of Fe-S biogenesis. The sequence is that of Iron-sulfur cluster assembly protein CyaY from Pseudomonas fluorescens (strain Pf0-1).